Reading from the N-terminus, the 104-residue chain is MSYAVIVTGGKQYKVAEGEFLKIEKLEVATGESVTFDRVLLVANGDDVTIGAPVVAGAKVVAEVVSQGRHDKVRIIKFRRRKHHMKRMGHRQWFTEIKITGIQA.

The protein belongs to the bacterial ribosomal protein bL21 family. As to quaternary structure, part of the 50S ribosomal subunit. Contacts protein L20.

In terms of biological role, this protein binds to 23S rRNA in the presence of protein L20. The sequence is that of Large ribosomal subunit protein bL21 from Pseudomonas entomophila (strain L48).